Here is an 88-residue protein sequence, read N- to C-terminus: Class I hydrophobin F (88 aa).

The N-terminal stretch at Met-1 to Thr-21 is a signal peptide. Disulfide bonds link Cys-30–Cys-67, Cys-34–Cys-58, Cys-35–Cys-51, and Cys-68–Cys-84.

This sequence belongs to the fungal hydrophobin family.

It is found in the secreted. Its subcellular location is the cell wall. It localises to the vacuole. The protein localises to the cytoplasmic vesicle. Functionally, aerial growth, conidiation, and dispersal of filamentous fungi in the environment rely upon a capability of their secreting small amphipathic proteins called hydrophobins (HPBs) with low sequence identity. Class I can self-assemble into an outermost layer of rodlet bundles on aerial cell surfaces, conferring cellular hydrophobicity that supports fungal growth, development and dispersal; whereas Class II form highly ordered films at water-air interfaces through intermolecular interactions but contribute nothing to the rodlet structure. Hyd1F contributes to certain cell wall-related features, such as hydrophobicity but is not involved in cell wall-related events during fungal proliferation in host hemocoel. Does not contribute to conidial hydrophobicity. The polypeptide is Class I hydrophobin F (Beauveria bassiana (strain ARSEF 2860) (White muscardine disease fungus)).